A 780-amino-acid polypeptide reads, in one-letter code: Phosphoenolpyruvate synthase (780 aa).

The Tele-phosphohistidine intermediate role is filled by H409. Residues R499, R566, E668, G689, S690, N691, and D692 each contribute to the substrate site. Position 668 (E668) interacts with Mg(2+). D692 contributes to the Mg(2+) binding site.

The protein belongs to the PEP-utilizing enzyme family. The cofactor is Mg(2+).

The catalysed reaction is pyruvate + ATP + H2O = phosphoenolpyruvate + AMP + phosphate + 2 H(+). It participates in carbohydrate biosynthesis; gluconeogenesis. Its function is as follows. Catalyzes the phosphorylation of pyruvate to phosphoenolpyruvate. The chain is Phosphoenolpyruvate synthase (ppsA) from Deinococcus radiodurans (strain ATCC 13939 / DSM 20539 / JCM 16871 / CCUG 27074 / LMG 4051 / NBRC 15346 / NCIMB 9279 / VKM B-1422 / R1).